The chain runs to 677 residues: DNA gyrase subunit B, novobiocin-resistant (677 aa).

The interval 1 to 23 is disordered; the sequence is MTTYDTRTATDTRGSEQPGHVGT. Positions 154–295 are novobiocin-binding; it reads IWTDGHRWTQ…RLLSAEIALQ (142 aa). Residues 456-570 form the Toprim domain; it reads SEIFIVEGDS…EGHVHLSRPP (115 aa). Glu-462, Asp-535, and Asp-537 together coordinate Mg(2+).

This sequence belongs to the type II topoisomerase GyrB family. As to quaternary structure, heterotetramer, composed of two GyrA and two GyrB chains. In the heterotetramer, GyrA contains the active site tyrosine that forms a transient covalent intermediate with DNA, while GyrB binds cofactors and catalyzes ATP hydrolysis. Mg(2+) is required as a cofactor. Mn(2+) serves as cofactor. The cofactor is Ca(2+).

The protein resides in the cytoplasm. The enzyme catalyses ATP-dependent breakage, passage and rejoining of double-stranded DNA.. Functionally, a type II topoisomerase that negatively supercoils closed circular double-stranded (ds) DNA in an ATP-dependent manner to modulate DNA topology and maintain chromosomes in an underwound state. Negative supercoiling favors strand separation, and DNA replication, transcription, recombination and repair, all of which involve strand separation. Also able to catalyze the interconversion of other topological isomers of dsDNA rings, including catenanes and knotted rings. Type II topoisomerases break and join 2 DNA strands simultaneously in an ATP-dependent manner. This is DNA gyrase subunit B, novobiocin-resistant from Streptomyces niveus (Streptomyces spheroides).